Reading from the N-terminus, the 79-residue chain is Conotoxin Vi6.3 (79 aa).

Positions 1–22 (MKLTCVLIITVLFLTASQLITA) are cleaved as a signal peptide. Positions 23–47 (DYSRDQRQYRAVRLGDEMRNFKGAR) are excised as a propeptide. Disulfide bonds link Cys-49–Cys-62, Cys-56–Cys-67, and Cys-61–Cys-77. 2 positions are modified to 4-hydroxyproline: Pro-60 and Pro-63.

This sequence belongs to the conotoxin O1 superfamily. In terms of tissue distribution, expressed by the venom duct.

Its subcellular location is the secreted. Functionally, ion channel inhibitor that inhibits the increase in intracellular calcium upon depolarization in DRG neurons. In vivo, both intraperitoneal and intracranial injections into mice induce hyperactivity. The sequence is that of Conotoxin Vi6.3 from Conus virgo (Virgin cone).